A 141-amino-acid polypeptide reads, in one-letter code: ATP synthase epsilon chain (141 aa).

Belongs to the ATPase epsilon chain family. As to quaternary structure, F-type ATPases have 2 components, CF(1) - the catalytic core - and CF(0) - the membrane proton channel. CF(1) has five subunits: alpha(3), beta(3), gamma(1), delta(1), epsilon(1). CF(0) has three main subunits: a, b and c.

It localises to the cell inner membrane. Its function is as follows. Produces ATP from ADP in the presence of a proton gradient across the membrane. The protein is ATP synthase epsilon chain of Pseudomonas aeruginosa (strain LESB58).